Here is a 284-residue protein sequence, read N- to C-terminus: 2-dehydro-3-deoxyphosphooctonate aldolase (284 aa).

This sequence belongs to the KdsA family.

Its subcellular location is the cytoplasm. It carries out the reaction D-arabinose 5-phosphate + phosphoenolpyruvate + H2O = 3-deoxy-alpha-D-manno-2-octulosonate-8-phosphate + phosphate. It participates in carbohydrate biosynthesis; 3-deoxy-D-manno-octulosonate biosynthesis; 3-deoxy-D-manno-octulosonate from D-ribulose 5-phosphate: step 2/3. It functions in the pathway bacterial outer membrane biogenesis; lipopolysaccharide biosynthesis. The chain is 2-dehydro-3-deoxyphosphooctonate aldolase from Escherichia fergusonii (strain ATCC 35469 / DSM 13698 / CCUG 18766 / IAM 14443 / JCM 21226 / LMG 7866 / NBRC 102419 / NCTC 12128 / CDC 0568-73).